Consider the following 314-residue polypeptide: ATP synthase gamma chain (314 aa).

This sequence belongs to the ATPase gamma chain family. In terms of assembly, F-type ATPases have 2 components, CF(1) - the catalytic core - and CF(0) - the membrane proton channel. CF(1) has five subunits: alpha(3), beta(3), gamma(1), delta(1), epsilon(1). CF(0) has three main subunits: a, b and c.

It is found in the cellular thylakoid membrane. Its function is as follows. Produces ATP from ADP in the presence of a proton gradient across the membrane. The gamma chain is believed to be important in regulating ATPase activity and the flow of protons through the CF(0) complex. The protein is ATP synthase gamma chain of Picosynechococcus sp. (strain ATCC 27264 / PCC 7002 / PR-6) (Agmenellum quadruplicatum).